The chain runs to 281 residues: NADPH-dependent 7-cyano-7-deazaguanine reductase (281 aa).

89–91 contacts substrate; it reads VES. 91–92 lines the NADPH pocket; the sequence is SK. Cys188 serves as the catalytic Thioimide intermediate. Catalysis depends on Asp195, which acts as the Proton donor. 227-228 contacts substrate; that stretch reads HE. 256–257 lines the NADPH pocket; sequence RG.

It belongs to the GTP cyclohydrolase I family. QueF type 2 subfamily. Homodimer.

Its subcellular location is the cytoplasm. The enzyme catalyses 7-aminomethyl-7-carbaguanine + 2 NADP(+) = 7-cyano-7-deazaguanine + 2 NADPH + 3 H(+). It functions in the pathway tRNA modification; tRNA-queuosine biosynthesis. Its function is as follows. Catalyzes the NADPH-dependent reduction of 7-cyano-7-deazaguanine (preQ0) to 7-aminomethyl-7-deazaguanine (preQ1). The chain is NADPH-dependent 7-cyano-7-deazaguanine reductase from Azoarcus sp. (strain BH72).